Here is a 108-residue protein sequence, read N- to C-terminus: C-C motif chemokine 19 (108 aa).

An N-terminal signal peptide occupies residues 1-25 (MAPRVTPLLAFSLLVLWTFPAPTLG). 2 disulfide bridges follow: Cys33–Cys59 and Cys34–Cys75. Asn100 carries N-linked (GlcNAc...) asparagine glycosylation.

Belongs to the intercrine beta (chemokine CC) family. Interacts with TNFAIP6 (via Link domain). As to expression, highly expressed by dendritic cells in mesenteric and peripheral lymph nodes. Significant expression in spleen (T cell zone or periarteriolar lymphatic sheath) and Peyer patches. Low expression in thymus.

The protein resides in the secreted. Strongly chemotactic for naive (L-selectinhi) CD4 T-cells and for CD8 T-cells and weakly attractive for resting B-cells and memory (L-selectinlo) CD4 T-cells. May play a role in promoting encounters between recirculating T-cells and dendritic cells and in the migration of activated B-cells into the T-zone of secondary lymphoid tissues. Binds to chemokine receptor CCR7. Binds to atypical chemokine receptor ACKR4 and mediates the recruitment of beta-arrestin (ARRB1/2) to ACKR4. This chain is C-C motif chemokine 19 (Ccl19), found in Mus musculus (Mouse).